We begin with the raw amino-acid sequence, 442 residues long: D-inositol 3-phosphate glycosyltransferase (442 aa).

1D-myo-inositol 3-phosphate is bound at residue histidine 15. Residues 21 to 22 (QP) and glycine 29 contribute to the UDP-N-acetyl-alpha-D-glucosamine site. 1D-myo-inositol 3-phosphate contacts are provided by residues 26-31 (DAGGMN), lysine 84, tyrosine 117, threonine 141, and arginine 161. UDP-N-acetyl-alpha-D-glucosamine contacts are provided by arginine 235, lysine 240, and glutamine 299. 3 residues coordinate Mg(2+): tyrosine 308, arginine 309, and serine 311. UDP-N-acetyl-alpha-D-glucosamine contacts are provided by glutamate 321 and glutamate 329. Mg(2+) is bound at residue threonine 335.

It belongs to the glycosyltransferase group 1 family. MshA subfamily. In terms of assembly, homodimer.

It catalyses the reaction 1D-myo-inositol 3-phosphate + UDP-N-acetyl-alpha-D-glucosamine = 1D-myo-inositol 2-acetamido-2-deoxy-alpha-D-glucopyranoside 3-phosphate + UDP + H(+). Its function is as follows. Catalyzes the transfer of a N-acetyl-glucosamine moiety to 1D-myo-inositol 3-phosphate to produce 1D-myo-inositol 2-acetamido-2-deoxy-glucopyranoside 3-phosphate in the mycothiol biosynthesis pathway. The protein is D-inositol 3-phosphate glycosyltransferase of Rhodococcus erythropolis (strain PR4 / NBRC 100887).